The chain runs to 319 residues: Lambda-crystallin (319 aa).

Position 2 is an N-acetylalanine (Ala2). Ser3 is subject to Phosphoserine. Residues Leu16 to Val17, Asp36, Glu97, and Lys102 contribute to the NAD(+) site. The residue at position 111 (Ser111) is a Phosphoserine.

Belongs to the 3-hydroxyacyl-CoA dehydrogenase family. As to quaternary structure, homodimer. In terms of tissue distribution, detected in eye lens, kidney, liver, heart, lung, brain and testis.

It is found in the cytoplasm. The catalysed reaction is L-gulonate + NAD(+) = 3-dehydro-L-gulonate + NADH + H(+). Its activity is regulated as follows. Inhibited by malonate and by inorganic phosphate. Functions as a crystallin in the rabbit eye lens. Has high L-gulonate 3-dehydrogenase activity. It also exhibits low dehydrogenase activity toward L-3-hydroxybutyrate (HBA) and L-threonate. The protein is Lambda-crystallin (CRYL1) of Oryctolagus cuniculus (Rabbit).